A 658-amino-acid chain; its full sequence is Glycogen debranching enzyme (658 aa).

Residue Asp-336 is the Nucleophile of the active site. Glu-371 (proton donor) is an active-site residue. The disordered stretch occupies residues 459–484; the sequence is EANGEENRDGTNSNYSDNHGKEGLGG.

It belongs to the glycosyl hydrolase 13 family.

It carries out the reaction Hydrolysis of (1-&gt;6)-alpha-D-glucosidic linkages to branches with degrees of polymerization of three or four glucose residues in limit dextrin.. The protein operates within glycan degradation; glycogen degradation. Removes maltotriose and maltotetraose chains that are attached by 1,6-alpha-linkage to the limit dextrin main chain, generating a debranched limit dextrin. The sequence is that of Glycogen debranching enzyme from Salmonella paratyphi B (strain ATCC BAA-1250 / SPB7).